We begin with the raw amino-acid sequence, 391 residues long: 8-amino-7-oxononanoate synthase (391 aa).

Arg19 is a binding site for substrate. Residue 106–107 participates in pyridoxal 5'-phosphate binding; it reads GY. Residue His131 coordinates substrate. Residues Ser178, His206, and Thr234 each coordinate pyridoxal 5'-phosphate. N6-(pyridoxal phosphate)lysine is present on Lys237. Position 353 (Thr353) interacts with substrate.

The protein belongs to the class-II pyridoxal-phosphate-dependent aminotransferase family. BioF subfamily. As to quaternary structure, homodimer. Pyridoxal 5'-phosphate serves as cofactor.

It catalyses the reaction 6-carboxyhexanoyl-[ACP] + L-alanine + H(+) = (8S)-8-amino-7-oxononanoate + holo-[ACP] + CO2. It participates in cofactor biosynthesis; biotin biosynthesis. Catalyzes the decarboxylative condensation of pimeloyl-[acyl-carrier protein] and L-alanine to produce 8-amino-7-oxononanoate (AON), [acyl-carrier protein], and carbon dioxide. The protein is 8-amino-7-oxononanoate synthase of Geobacter sulfurreducens (strain ATCC 51573 / DSM 12127 / PCA).